A 190-amino-acid polypeptide reads, in one-letter code: Secreted isochorismatase effector Isc1 (190 aa).

Active-site residues include aspartate 26, lysine 100, and cysteine 133.

It belongs to the isochorismatase family.

It is found in the secreted. It localises to the host cytoplasm. The protein resides in the host nucleus. It carries out the reaction isochorismate + H2O = (2S,3S)-2,3-dihydroxy-2,3-dihydrobenzoate + pyruvate. In terms of biological role, secreted isochorismatase required for full virulence of V.dahliae. Suppresses salicylate-mediated innate immunity of the host by disrupting the plant salicylate metabolism pathway via hydrolysis of its isochorismate precursor. This Verticillium dahliae (strain VdLs.17 / ATCC MYA-4575 / FGSC 10137) (Verticillium wilt) protein is Secreted isochorismatase effector Isc1.